The sequence spans 650 residues: Probable potassium transport system protein Kup 1 (650 aa).

12 helical membrane passes run 12-32 (GLLIAIGIVYGDIGTSPLYVM), 54-74 (ISLVLWTVTLLTTLQTVIIAL), 97-117 (WLVLPALIGGAAILADGTLTP), 139-159 (VSSQSMVIAITVLILLVLFSI), 170-190 (AFGPIMFVWFTFLGVIGLINM), 216-236 (AGIFILGSIFLATTGAEALYS), 249-269 (SWPFVFVCLSLNYFGQGVWIL), 295-315 (LAAIILATIAAVIASQALITG), 344-364 (IYIPSINKGICVATIAIVLYF), 375-395 (GLSITISMLMTTILLYEWLAM), 400-420 (PVWNWIFLIFFGVLDIMFMIS), and 428-448 (GGYVSLFIAGAIGFIMYVWYY).

This sequence belongs to the HAK/KUP transporter (TC 2.A.72) family.

The protein resides in the cell membrane. It catalyses the reaction K(+)(in) + H(+)(in) = K(+)(out) + H(+)(out). Its function is as follows. Transport of potassium into the cell. Likely operates as a K(+):H(+) symporter. This is Probable potassium transport system protein Kup 1 from Lactobacillus acidophilus (strain ATCC 700396 / NCK56 / N2 / NCFM).